Consider the following 397-residue polypeptide: Mannonate dehydratase (397 aa).

It belongs to the mannonate dehydratase family. Fe(2+) is required as a cofactor. It depends on Mn(2+) as a cofactor.

It carries out the reaction D-mannonate = 2-dehydro-3-deoxy-D-gluconate + H2O. It participates in carbohydrate metabolism; pentose and glucuronate interconversion. Its function is as follows. Catalyzes the dehydration of D-mannonate. In Saccharophagus degradans (strain 2-40 / ATCC 43961 / DSM 17024), this protein is Mannonate dehydratase.